Here is a 631-residue protein sequence, read N- to C-terminus: Phosphomethylpyrimidine synthase (631 aa).

Substrate is bound by residues N239, M268, Y297, H333, 353-355, 394-397, and E433; these read SRG and DGLR. H437 is a binding site for Zn(2+). Residue Y460 coordinates substrate. Position 501 (H501) interacts with Zn(2+). The [4Fe-4S] cluster site is built by C581, C584, and C589.

The protein belongs to the ThiC family. In terms of assembly, homodimer. [4Fe-4S] cluster is required as a cofactor.

The catalysed reaction is 5-amino-1-(5-phospho-beta-D-ribosyl)imidazole + S-adenosyl-L-methionine = 4-amino-2-methyl-5-(phosphooxymethyl)pyrimidine + CO + 5'-deoxyadenosine + formate + L-methionine + 3 H(+). Its pathway is cofactor biosynthesis; thiamine diphosphate biosynthesis. Its function is as follows. Catalyzes the synthesis of the hydroxymethylpyrimidine phosphate (HMP-P) moiety of thiamine from aminoimidazole ribotide (AIR) in a radical S-adenosyl-L-methionine (SAM)-dependent reaction. The polypeptide is Phosphomethylpyrimidine synthase (Escherichia coli O127:H6 (strain E2348/69 / EPEC)).